The primary structure comprises 92 residues: Large ribosomal subunit protein bL25 (92 aa).

This sequence belongs to the bacterial ribosomal protein bL25 family. As to quaternary structure, part of the 50S ribosomal subunit; part of the 5S rRNA/L5/L18/L25 subcomplex. Contacts the 5S rRNA. Binds to the 5S rRNA independently of L5 and L18.

Its function is as follows. This is one of the proteins that binds to the 5S RNA in the ribosome where it forms part of the central protuberance. The sequence is that of Large ribosomal subunit protein bL25 from Vibrio atlanticus (strain LGP32) (Vibrio splendidus (strain Mel32)).